Reading from the N-terminus, the 122-residue chain is Small ribosomal subunit protein uS13 (122 aa).

The tract at residues Arg-94–Lys-122 is disordered.

It belongs to the universal ribosomal protein uS13 family. As to quaternary structure, part of the 30S ribosomal subunit. Forms a loose heterodimer with protein S19. Forms two bridges to the 50S subunit in the 70S ribosome.

Its function is as follows. Located at the top of the head of the 30S subunit, it contacts several helices of the 16S rRNA. In the 70S ribosome it contacts the 23S rRNA (bridge B1a) and protein L5 of the 50S subunit (bridge B1b), connecting the 2 subunits; these bridges are implicated in subunit movement. Contacts the tRNAs in the A and P-sites. The sequence is that of Small ribosomal subunit protein uS13 from Syntrophotalea carbinolica (strain DSM 2380 / NBRC 103641 / GraBd1) (Pelobacter carbinolicus).